The following is a 468-amino-acid chain: Glutamate--tRNA ligase (468 aa).

The 'HIGH' region signature appears at 8–18 (PSPTGFLHVGG). Zn(2+)-binding residues include Cys97, Cys99, Cys124, and Asp126. A 'KMSKS' region motif is present at residues 236–240 (KLSKR). Lys239 provides a ligand contact to ATP.

The protein belongs to the class-I aminoacyl-tRNA synthetase family. Glutamate--tRNA ligase type 1 subfamily. As to quaternary structure, monomer. It depends on Zn(2+) as a cofactor.

The protein resides in the cytoplasm. The catalysed reaction is tRNA(Glu) + L-glutamate + ATP = L-glutamyl-tRNA(Glu) + AMP + diphosphate. In terms of biological role, catalyzes the attachment of glutamate to tRNA(Glu) in a two-step reaction: glutamate is first activated by ATP to form Glu-AMP and then transferred to the acceptor end of tRNA(Glu). The protein is Glutamate--tRNA ligase of Francisella tularensis subsp. tularensis (strain SCHU S4 / Schu 4).